Here is a 1916-residue protein sequence, read N- to C-terminus: Endoribonuclease Dicer (1916 aa).

One can recognise a Helicase ATP-binding domain in the interval 51–227; that stretch reads LLEAALDHNT…ELEEKIQKLE (177 aa). ATP is bound at residue 64 to 71; sequence LNTGSGKT. Residues 175 to 178 carry the DECH box motif; it reads DECH. Residues 256–595 are required for interaction with PRKRA and TARBP2; that stretch reads DCGPFTDRSG…LRNKCSKSAD (340 aa). The interval 409–433 is disordered; it reads YVSWSDSEDDDDDEEIEEKEKPETN. Residues Ser413 and Ser415 each carry the phosphoserine modification. Positions 414–425 are enriched in acidic residues; the sequence is DSEDDDDDEEIE. The 170-residue stretch at 433–602 folds into the Helicase C-terminal domain; sequence NFPSPFTNIL…SADGAEADVH (170 aa). The Dicer dsRNA-binding fold domain maps to 630 to 722; that stretch reads AIGHINRYCA…MPVGKETVKY (93 aa). The segment at 726-745 is disordered; that stretch reads LDLHDEEETSVPGRPGSTKR. A PAZ domain is found at 895 to 1042; the sequence is KFMEDIEKSE…LVPELCAIHP (148 aa). Residues Ser1016 and Ser1160 each carry the phosphoserine modification. The region spanning 1276 to 1403 is the RNase III 1 domain; the sequence is DSEQSPSVGY…SEKWEKDEMT (128 aa). Positions 1316, 1395, and 1398 each coordinate Mg(2+). A phosphoserine mark is found at Ser1456, Ser1464, and Ser1466. Positions 1598–1626 are disordered; it reads ALDPAQENGSSQQKSLSGSCAAPVGPRSS. Residues 1604–1615 show a composition bias toward polar residues; that stretch reads ENGSSQQKSLSG. Positions 1660-1818 constitute an RNase III 2 domain; the sequence is FETFEKKINY…LAGAIYMDSG (159 aa). Mg(2+) contacts are provided by Glu1699, Asp1804, and Glu1807. A DRBM domain is found at 1843–1908; that stretch reads VPRSPVRELL…ARRALRSLKA (66 aa). At Ser1862 the chain carries Phosphoserine.

Belongs to the helicase family. Dicer subfamily. Component of the RISC loading complex (RLC), or micro-RNA (miRNA) loading complex (miRLC), which is composed of DICER1, AGO2 and TARBP2; DICER1 and TARBP2 are required to process precursor miRNAs (pre-miRNAs) to mature miRNAs and then load them onto AGO2. Note that the trimeric RLC/miRLC is also referred to as RISC. Interacts with DHX9, AGO1, PIWIL1 and PRKRA. Interacts with AGO2, TARBP2, EIF6, MOV10 and RPL7A (60S ribosome subunit); they form a large RNA-induced silencing complex (RISC). Interacts with BCDIN3D. Interacts (via Dicer dsRNA-binding fold domain) with ALOX5 (via PLAT domain); this interaction enhances arachidonate 5-lipoxygenase activity and modifies the miRNA precursor processing activity of DICER1. It depends on Mg(2+) as a cofactor. Requires Mn(2+) as cofactor. Isoform 1 is expressed in a wide variety of tissues. Isoform 2 is specifically expressed in oocytes during their growth (at protein level).

Its subcellular location is the cytoplasm. The catalysed reaction is Endonucleolytic cleavage to 5'-phosphomonoester.. Its function is as follows. Double-stranded RNA (dsRNA) endoribonuclease playing a central role in short dsRNA-mediated post-transcriptional gene silencing. Cleaves naturally occurring long dsRNAs and short hairpin pre-microRNAs (miRNA) into fragments of twenty-one to twenty-three nucleotides with 3' overhang of two nucleotides, producing respectively short interfering RNAs (siRNA) and mature microRNAs. SiRNAs and miRNAs serve as guide to direct the RNA-induced silencing complex (RISC) to complementary RNAs to degrade them or prevent their translation. Gene silencing mediated by siRNAs, also called RNA interference, controls the elimination of transcripts from mobile and repetitive DNA elements of the genome but also the degradation of exogenous RNA of viral origin for instance. The miRNA pathway on the other side is a mean to specifically regulate the expression of target genes. In terms of biological role, more active than isoform 1 to process long double-stranded RNA into siRNAs. Responsible for the accumulation of endogenous siRNAs observed in mouse oocytes compared to somatic cells and it regulates meiotic spindle organization in female germline. The sequence is that of Endoribonuclease Dicer (Dicer1) from Mus musculus (Mouse).